We begin with the raw amino-acid sequence, 89 residues long: Protein FAM25A (89 aa).

It belongs to the FAM25 family.

The protein is Protein FAM25A of Homo sapiens (Human).